We begin with the raw amino-acid sequence, 224 residues long: Ribonuclease HII (224 aa).

Positions 1-219 (MMIAGIDEAG…VENIREELKK (219 aa)) constitute an RNase H type-2 domain. The a divalent metal cation site is built by Asp-7, Glu-8, and Asp-105.

It belongs to the RNase HII family. It depends on Mn(2+) as a cofactor. Mg(2+) is required as a cofactor.

Its subcellular location is the cytoplasm. It catalyses the reaction Endonucleolytic cleavage to 5'-phosphomonoester.. Endonuclease that specifically degrades the RNA of RNA-DNA hybrids. The chain is Ribonuclease HII from Methanosarcina barkeri (strain Fusaro / DSM 804).